Here is a 67-residue protein sequence, read N- to C-terminus: DNA-directed RNA polymerase subunit omega (67 aa).

It belongs to the RNA polymerase subunit omega family. In terms of assembly, the RNAP catalytic core consists of 2 alpha, 1 beta, 1 beta' and 1 omega subunit. When a sigma factor is associated with the core the holoenzyme is formed, which can initiate transcription.

The enzyme catalyses RNA(n) + a ribonucleoside 5'-triphosphate = RNA(n+1) + diphosphate. Its function is as follows. Promotes RNA polymerase assembly. Latches the N- and C-terminal regions of the beta' subunit thereby facilitating its interaction with the beta and alpha subunits. The polypeptide is DNA-directed RNA polymerase subunit omega (Nitrosomonas eutropha (strain DSM 101675 / C91 / Nm57)).